A 221-amino-acid polypeptide reads, in one-letter code: PKHD-type hydroxylase P9211_12561 (221 aa).

The Fe2OG dioxygenase domain occupies 80–174 (KVHGTMFTRS…RIVCVGWIQS (95 aa)). Histidine 98, aspartate 100, and histidine 155 together coordinate Fe cation. 2-oxoglutarate is bound at residue arginine 165.

The cofactor is Fe(2+). L-ascorbate is required as a cofactor.

In Prochlorococcus marinus (strain MIT 9211), this protein is PKHD-type hydroxylase P9211_12561.